Here is a 227-residue protein sequence, read N- to C-terminus: Small ribosomal subunit protein uS3 (227 aa).

Positions 24–94 constitute a KH type-2 domain; it reads LDEYLEEELG…RVSIEVKELP (71 aa). Residues 207–227 form a disordered region; that stretch reads EEVEDELKELIGKSEDEAEGA.

The protein belongs to the universal ribosomal protein uS3 family. Part of the 30S ribosomal subunit.

Functionally, binds the lower part of the 30S subunit head. This Methanopyrus kandleri (strain AV19 / DSM 6324 / JCM 9639 / NBRC 100938) protein is Small ribosomal subunit protein uS3.